A 1997-amino-acid chain; its full sequence is Nucleoprotein TPR (1997 aa).

4 coiled-coil regions span residues 1–36, 101–277, 335–1103, and 1129–1305; these read QEQH…NDLL, EIVK…HQMT, DSTE…IKTI, and AEAS…EPQE. 2 stretches are compositionally biased toward basic and acidic residues: residues 672–702 and 1290–1305; these read SSEY…KTVE and REQQ…EPQE. 6 disordered regions span residues 672–706, 1290–1352, 1438–1529, 1561–1752, 1795–1832, and 1870–1997; these read SSEY…QMEQ, REQQ…AAVP, AFVQ…KTET, IQTS…RRQS, AIHS…ASQG, and ENPA…RSNI. Composition is skewed to polar residues over residues 1306-1321, 1328-1347, and 1446-1487; these read TTRI…QPTT, SANT…SKVT, and SHAT…SSSI. A compositionally biased stretch (basic and acidic residues) spans 1511–1529; sequence DQQRTKKRKEEDIEEKTET. Over residues 1561–1587 the composition is skewed to polar residues; it reads IQTSQVIESQAPEQLQNVQSTQDSLQD. Acidic residues-rich tracts occupy residues 1601-1637 and 1644-1667; these read SDEE…DSNE and GNED…ETED. Polar residues-rich tracts occupy residues 1692 to 1709, 1817 to 1830, and 1879 to 1899; these read AEST…SASD, QASS…QLAS, and HASQ…TSVD. The segment covering 1902 to 1915 has biased composition (acidic residues); the sequence is AADEGDEVFVEAES. The span at 1950 to 1959 shows a compositional bias: low complexity; the sequence is SSSIADTSSS.

It belongs to the TPR family. Homodimer. Part of the nuclear pore complex (NPC). Interacts with nuclear receptor KPNB1; the interaction occurs in a RanGTP-dependent manner. Associates with the Importin alpha/Importin beta receptor. Expressed in epithelial cells, oocytes and egg (at protein level).

The protein resides in the nucleus. Its subcellular location is the nucleus membrane. The protein localises to the nucleus envelope. It localises to the nuclear pore complex. It is found in the cytoplasm. The protein resides in the cytoskeleton. Its subcellular location is the spindle. The protein localises to the chromosome. It localises to the centromere. It is found in the kinetochore. Its function is as follows. Component of the nuclear pore complex (NPC), a complex required for the trafficking across the nuclear envelope. Functions as a scaffolding element in the nuclear phase of the NPC essential for normal nucleocytoplasmic transport of proteins and mRNAs, plays a role in the establishment of nuclear-peripheral chromatin compartmentalization in interphase, and in the mitotic spindle checkpoint signaling during mitosis. Involved in the quality control and retention of unspliced mRNAs in the nucleus. Implicated in nuclear export of mRNAs transcribed from heat shock gene promoters. May play a limited role in the regulation of nuclear protein export. May be involved in the formation and/or maintenance of NPC-associated perinuclear heterochromatin exclusion zones (HEZs). Finally, may act as a spatial regulator of the spindle-assembly checkpoint (SAC) response. This chain is Nucleoprotein TPR, found in Xenopus laevis (African clawed frog).